A 132-amino-acid chain; its full sequence is Outer membrane protein RomA (132 aa).

The protein to M.tuberculosis Rv0906.

It is found in the cell outer membrane. The sequence is that of Outer membrane protein RomA (romA) from Klebsiella pneumoniae.